The following is a 342-amino-acid chain: Ribosomal RNA small subunit methyltransferase C (342 aa).

The protein belongs to the methyltransferase superfamily. RsmC family. In terms of assembly, monomer.

The protein localises to the cytoplasm. It catalyses the reaction guanosine(1207) in 16S rRNA + S-adenosyl-L-methionine = N(2)-methylguanosine(1207) in 16S rRNA + S-adenosyl-L-homocysteine + H(+). Specifically methylates the guanine in position 1207 of 16S rRNA in the 30S particle. The protein is Ribosomal RNA small subunit methyltransferase C of Salmonella arizonae (strain ATCC BAA-731 / CDC346-86 / RSK2980).